Here is a 160-residue protein sequence, read N- to C-terminus: uncharacterized protein (160 aa).

Its subcellular location is the plastid. This is an uncharacterized protein from Euglena longa (Euglenophycean alga).